Here is a 61-residue protein sequence, read N- to C-terminus: uncharacterized protein (61 aa).

A helical membrane pass occupies residues 10–27; it reads RILFFFFIFFTLFLFNIP.

It is found in the membrane. This is an uncharacterized protein from Dictyostelium discoideum (Social amoeba).